Consider the following 485-residue polypeptide: Glutamyl-tRNA(Gln) amidotransferase subunit A (485 aa).

Active-site charge relay system residues include Lys79 and Ser154. The active-site Acyl-ester intermediate is Ser178.

The protein belongs to the amidase family. GatA subfamily. In terms of assembly, heterotrimer of A, B and C subunits.

The catalysed reaction is L-glutamyl-tRNA(Gln) + L-glutamine + ATP + H2O = L-glutaminyl-tRNA(Gln) + L-glutamate + ADP + phosphate + H(+). Its function is as follows. Allows the formation of correctly charged Gln-tRNA(Gln) through the transamidation of misacylated Glu-tRNA(Gln) in organisms which lack glutaminyl-tRNA synthetase. The reaction takes place in the presence of glutamine and ATP through an activated gamma-phospho-Glu-tRNA(Gln). This is Glutamyl-tRNA(Gln) amidotransferase subunit A from Clostridium botulinum (strain Loch Maree / Type A3).